Reading from the N-terminus, the 302-residue chain is MPTATALRIDAGSGASDLGEAIGRLAERSLVLELELTPKPGLVDRANSGAHRDMDVGTFRASIAAISPWFSFFFERGVDGSAVPVEDFLRYIRADGMACERAMFAATLGVNTHKGSVFSFGLLCAAAGRLHGRGRPLSRASVCAEVSHICAGLVKRELLLPAAARTAGELLYWQHGLTGARGEAQSGFATACAHGVVPYLLARAKGMDEERSLFEALLQLMAHNRDTNIVSRGGMEGLCLVQAEARRLLDCPTPSRSARTAQLAAFDQLLIERNLSPGGSADLLAVSWFLANLDELVCKCVA.

This sequence belongs to the CitG/MdcB family.

The catalysed reaction is 3'-dephospho-CoA + ATP = 2'-(5''-triphospho-alpha-D-ribosyl)-3'-dephospho-CoA + adenine. This is Probable 2-(5''-triphosphoribosyl)-3'-dephosphocoenzyme-A synthase from Albidiferax ferrireducens (strain ATCC BAA-621 / DSM 15236 / T118) (Rhodoferax ferrireducens).